A 398-amino-acid chain; its full sequence is Pheromone receptor transcription activator (398 aa).

3 disordered regions span residues Met1–Asp30, Thr101–Tyr125, and Pro254–Pro317. Residues Gly20 to Phe74 enclose the MADS-box domain. Residues Ser106–Ser121 show a composition bias toward low complexity. 2 stretches are compositionally biased toward polar residues: residues Thr262–Ser273 and Asn282–Pro294.

It localises to the nucleus. Its function is as follows. In response to mating-pheromone signaling or nitrogen starvation, it interacts with mat1-Pc. This activates the expression of one of two mating-type-specific genes sxa2 or map3, which leads to inactivation of the P-factor. May also interact with mat1-Mc. The sequence is that of Pheromone receptor transcription activator (map1) from Schizosaccharomyces pombe (strain 972 / ATCC 24843) (Fission yeast).